We begin with the raw amino-acid sequence, 357 residues long: Alanine racemase (357 aa).

The Proton acceptor; specific for D-alanine role is filled by lysine 33. Residue lysine 33 is modified to N6-(pyridoxal phosphate)lysine. Arginine 129 lines the substrate pocket. The Proton acceptor; specific for L-alanine role is filled by tyrosine 253. Methionine 301 provides a ligand contact to substrate.

This sequence belongs to the alanine racemase family. In terms of assembly, homodimer. The cofactor is pyridoxal 5'-phosphate.

The catalysed reaction is L-alanine = D-alanine. The protein operates within amino-acid biosynthesis; D-alanine biosynthesis; D-alanine from L-alanine: step 1/1. Catalyzes the interconversion of L-alanine and D-alanine. Is highly specific for alanine as substrate. May serve both anabolic and catabolic purposes. In Pseudomonas taetrolens, this protein is Alanine racemase.